The primary structure comprises 331 residues: MELHILEHRVRVLSIARPGLWLYTHPLIKLLFLPCRSRCKFFSLTETPEDYTLMVDEEGFKELPPSEFLQVAEATWLVMNVSHSGSVVQAAGVTKIARSVIAPLAEHHVSVLMLSTYQTDFILVREQDLSVVIHTLAQEFQIYREVGGEPVPVTGDDSSNGFPQIQHGPSPTVHPIQSPQNRFCVLTLDPETLPAVATTLIDVLFYSHSVPKEAASGGPESTSIPFFAFSLIEGYISIVMDAEIQRKFPSDLLLTSSSGELWRMVRIGGQPLGFDECGIVAQIAGPLAAVDISAYYISTFNFDHALVPEDEIGCVIDILQRRQESQASKDP.

At S14 the chain carries Phosphoserine. ACT domains follow at residues 72–137 and 259–320; these read AEAT…HTLA and GELW…DILQ. L-arginine-binding positions include 110 to 111, G273, 279 to 280, and 299 to 303; these read SV, IV, and TFNFD.

This sequence belongs to the GATS family. As to quaternary structure, forms homodimers and heterodimers with CASTOR2. Interacts with the GATOR2 complex which is composed of MIOS, SEC13, SEH1L, WDR24 and WDR59; the interaction is negatively regulated by arginine. Interacts with TM4SF5; the interaction is positively regulated by leucine and is negatively regulated by arginine. Post-translationally, phosphorylation at Ser-14 by AKT1, promoting the interaction between CASTOR1 and RNF167. In terms of processing, ubiquitinated by RNF167 via 'Lys-29'-polyubiquitination, leading to its degradation, releasing the GATOR2 complex. Ubiquitination by RNF167 is promoted by phosphorylation at Ser-14 by AKT1.

Its subcellular location is the cytoplasm. It is found in the cytosol. Functionally, functions as an intracellular arginine sensor within the amino acid-sensing branch of the TORC1 signaling pathway. As a homodimer or a heterodimer with CASTOR2, binds and inhibits the GATOR subcomplex GATOR2 and thereby mTORC1. Binding of arginine to CASTOR1 allosterically disrupts the interaction of CASTOR1-containing dimers with GATOR2 which can in turn activate mTORC1 and the TORC1 signaling pathway. This is Cytosolic arginine sensor for mTORC1 subunit 1 from Mus musculus (Mouse).